The following is a 355-amino-acid chain: Histidinol-phosphate aminotransferase 2 (355 aa).

Residue K213 is modified to N6-(pyridoxal phosphate)lysine.

This sequence belongs to the class-II pyridoxal-phosphate-dependent aminotransferase family. Histidinol-phosphate aminotransferase subfamily. Homodimer. Pyridoxal 5'-phosphate is required as a cofactor.

The catalysed reaction is L-histidinol phosphate + 2-oxoglutarate = 3-(imidazol-4-yl)-2-oxopropyl phosphate + L-glutamate. Its pathway is amino-acid biosynthesis; L-histidine biosynthesis; L-histidine from 5-phospho-alpha-D-ribose 1-diphosphate: step 7/9. This chain is Histidinol-phosphate aminotransferase 2, found in Burkholderia lata (strain ATCC 17760 / DSM 23089 / LMG 22485 / NCIMB 9086 / R18194 / 383).